The following is a 326-amino-acid chain: Serpentine receptor class alpha-12 (326 aa).

The Extracellular portion of the chain corresponds to 1–17 (MSCASEVQAQLFTHPVQ). Residues 18–38 (IIYACVQTVLFLATIIGSLLA) form a helical membrane-spanning segment. Residues 39-54 (IVQLCKKTTIPDSTKV) lie on the Cytoplasmic side of the membrane. A helical transmembrane segment spans residues 55-75 (LLIGALFFANAHELAYFSSPF). The Extracellular segment spans residues 76 to 101 (KVFKMNLFHTNTSCYPLASTLECIPT). A helical transmembrane segment spans residues 102–122 (TTVLAMGISGNMLIQSALSIF). Residues 123–138 (RLLATIFPVCYSRMRA) are Cytoplasmic-facing. Residues 139-159 (LPGVVLLFMVLIPSFLSYSWI) form a helical membrane-spanning segment. Residues 160 to 185 (RSDIVLDDYQMFCSQWSANISSRANT) lie on the Extracellular side of the membrane. Residues 186 to 206 (YLEYCSYLTVAHIIINALIIL) form a helical membrane-spanning segment. Residues 207–234 (RNRSVESKCRFDVQQRYLNSETLKTTQT) are Cytoplasmic-facing. A helical transmembrane segment spans residues 235 to 255 (ICYLSIAQFLAMFLYSGGVLF). At 256-270 (MRKNQKNIPTLIYIN) the chain is on the extracellular side. The chain crosses the membrane as a helical span at residues 271 to 291 (VIVWVYAPPYACVSLAPLILF). Residues 292-326 (SLWNLKKQRQIRIQSITVQKETQEDHIRKLQLSWG) are Cytoplasmic-facing.

It belongs to the nematode receptor-like protein sra family.

It is found in the membrane. The polypeptide is Serpentine receptor class alpha-12 (Caenorhabditis briggsae).